Here is a 280-residue protein sequence, read N- to C-terminus: Large ribosomal subunit protein uL2 (280 aa).

Positions 215–280 are disordered; that stretch reads GRRPHVRGSA…IQRANDKKEK (66 aa).

Belongs to the universal ribosomal protein uL2 family. As to quaternary structure, part of the 50S ribosomal subunit. Forms a bridge to the 30S subunit in the 70S ribosome.

Its function is as follows. One of the primary rRNA binding proteins. Required for association of the 30S and 50S subunits to form the 70S ribosome, for tRNA binding and peptide bond formation. It has been suggested to have peptidyltransferase activity; this is somewhat controversial. Makes several contacts with the 16S rRNA in the 70S ribosome. This Dictyoglomus thermophilum (strain ATCC 35947 / DSM 3960 / H-6-12) protein is Large ribosomal subunit protein uL2.